A 408-amino-acid polypeptide reads, in one-letter code: Serine/threonine transporter SstT (408 aa).

Transmembrane regions (helical) follow at residues 11-31 (LANG…VILA), 43-63 (FLGS…VFIL), 81-101 (PIVV…VVLS), 141-161 (ALMT…GLAL), 192-212 (IGIF…AIAG), 216-236 (LLAV…PLIV), 298-318 (MGGA…TLGI), 330-350 (VVAA…LLLI), and 357-377 (FGIS…IGVI).

It belongs to the dicarboxylate/amino acid:cation symporter (DAACS) (TC 2.A.23) family.

It localises to the cell inner membrane. The enzyme catalyses L-serine(in) + Na(+)(in) = L-serine(out) + Na(+)(out). The catalysed reaction is L-threonine(in) + Na(+)(in) = L-threonine(out) + Na(+)(out). Its function is as follows. Involved in the import of serine and threonine into the cell, with the concomitant import of sodium (symport system). The chain is Serine/threonine transporter SstT from Shewanella sp. (strain W3-18-1).